Consider the following 358-residue polypeptide: Arginine kinase (358 aa).

Residues 2–84 (SDADLFSKLD…LDEVIKDYHK (83 aa)) enclose the Phosphagen kinase N-terminal domain. 57-61 (GVGIY) provides a ligand contact to substrate. The Phosphagen kinase C-terminal domain occupies 112–350 (FIVSTRVRVG…EEILKREKEL (239 aa)). Residues 115 to 119 (STRVR) and histidine 178 contribute to the ATP site. Residue glutamate 218 coordinates substrate. Arginine 222 lines the ATP pocket. Residue cysteine 265 participates in substrate binding. Residues 274-278 (RASVH) and 303-308 (RGIHGE) contribute to the ATP site. Glutamate 308 provides a ligand contact to substrate.

It belongs to the ATP:guanido phosphotransferase family.

The enzyme catalyses L-arginine + ATP = N(omega)-phospho-L-arginine + ADP + H(+). This chain is Arginine kinase, found in Turbo cornutus (Horned turban).